The following is a 255-amino-acid chain: Probable iron chelatin transport ATP-binding protein jhp_0821 (255 aa).

One can recognise an ABC transporter domain in the interval 3–240; sequence LEVKNLSFKY…HNLSALYDTP (238 aa). An ATP-binding site is contributed by 35-42; it reads APNGSGKT.

The protein belongs to the ABC transporter superfamily.

The protein localises to the cell inner membrane. Part of a binding-protein-dependent transport system for an iron chelatin. Probably responsible for energy coupling to the transport system (Potential). The sequence is that of Probable iron chelatin transport ATP-binding protein jhp_0821 from Helicobacter pylori (strain J99 / ATCC 700824) (Campylobacter pylori J99).